Consider the following 101-residue polypeptide: Small ribosomal subunit protein uS10 (101 aa).

The protein belongs to the universal ribosomal protein uS10 family. Part of the 30S ribosomal subunit.

Functionally, involved in the binding of tRNA to the ribosomes. This Mycoplasmopsis synoviae (strain 53) (Mycoplasma synoviae) protein is Small ribosomal subunit protein uS10.